The primary structure comprises 337 residues: Glutaminase-asparaginase (337 aa).

Residues Ala10–Tyr337 enclose the Asparaginase/glutaminase domain. The active-site Acyl-ester intermediate is the Thr20. Substrate-binding positions include Ser67 and Thr100–Asp101.

Belongs to the asparaginase 1 family. As to quaternary structure, homotetramer.

It is found in the periplasm. The catalysed reaction is L-glutamine + H2O = L-glutamate + NH4(+). It carries out the reaction L-asparagine + H2O = L-aspartate + NH4(+). In Pseudomonas sp. (strain ATCC 29598 / 7A), this protein is Glutaminase-asparaginase (ansB).